Consider the following 133-residue polypeptide: Ribosome-binding factor A (133 aa).

The protein belongs to the RbfA family. As to quaternary structure, monomer. Binds 30S ribosomal subunits, but not 50S ribosomal subunits or 70S ribosomes.

The protein resides in the cytoplasm. Functionally, one of several proteins that assist in the late maturation steps of the functional core of the 30S ribosomal subunit. Associates with free 30S ribosomal subunits (but not with 30S subunits that are part of 70S ribosomes or polysomes). Required for efficient processing of 16S rRNA. May interact with the 5'-terminal helix region of 16S rRNA. The chain is Ribosome-binding factor A from Bordetella pertussis (strain Tohama I / ATCC BAA-589 / NCTC 13251).